A 757-amino-acid chain; its full sequence is Endosialin (757 aa).

Residues 1–17 form the signal peptide; the sequence is MLLRLLLAWAAAGPTLG. The Extracellular segment spans residues 18–687; the sequence is QDPWAAEPRA…EHSQRDDRWL (670 aa). The C-type lectin domain maps to 30-156; that stretch reads GPSSCYALFP…CTLAVDGYLC (127 aa). The O-linked (GalNAc...) threonine glycan is linked to Thr-60. Cys-131 and Cys-147 are oxidised to a cystine. Residues 162–232 enclose the Sushi domain; it reads GACPALQDEA…WSRAGPLCLG (71 aa). The EGF-like; calcium-binding domain maps to 312–351; the sequence is DTDECQIAGVCQQMCVNYVGGFECYCSEGHELEADGISCS. 3 disulfide bridges follow: Cys-316/Cys-326, Cys-322/Cys-335, and Cys-337/Cys-350. O-linked (GalNAc...) threonine glycans are attached at residues Thr-401, Thr-428, Thr-448, Thr-456, Thr-459, Thr-472, Thr-519, Thr-541, Thr-543, Thr-544, Thr-545, Thr-587, Thr-593, Thr-594, and Thr-595. O-linked (GalNAc...) serine glycans are attached at residues Ser-598 and Ser-601. O-linked (GalNAc...) threonine glycans are attached at residues Thr-612 and Thr-619. Low complexity predominate over residues 618-627; that stretch reads PTLLPSQSPT. The interval 618-662 is disordered; it reads PTLLPSQSPTNQTSPISPTHPHSKAPQIPREDGPSPKLALWLPSP. O-linked (GalNAc...) serine glycosylation is found at Ser-623 and Ser-625. 2 O-linked (GalNAc...) threonine glycosylation sites follow: Thr-627 and Thr-630. O-linked (GalNAc...) serine glycosylation is present at Ser-631. Thr-636 carries an O-linked (GalNAc...) threonine glycan. A glycan (O-linked (GalNAc...) serine) is linked at Ser-640. Residues 688–708 traverse the membrane as a helical segment; it reads LVALLVPTCVFLVVLLALGIV. The Cytoplasmic segment spans residues 709-757; it reads YCTRCGPHAPNKRITDCYRWVIHAGSKSPTEPMPPRGSLTGVQTCRTSV. The disordered stretch occupies residues 737–757; sequence PTEPMPPRGSLTGVQTCRTSV. Phosphoserine is present on Ser-746. Positions 748-757 are enriched in polar residues; sequence TGVQTCRTSV.

As to quaternary structure, interacts with PDGFRA; this interaction promotes PDGF receptor signaling pathway. Interacts with integrin beta-1/ITGB1. Interacts with insulin receptor/INSR; this interaction diminishes INSR autophosphorylation. Post-translationally, O-glycosylated with sialylated oligosaccharides. May be N-glycosylated. In terms of tissue distribution, expressed in tumor endothelial cells but absent or barely detectable in normal endothelial cells. Expressed in metastatic lesions of the liver and during angiogenesis of corpus luteum formation and wound healing. Expressed in vascular endothelial cells of malignant tumors but not in normal blood vessels. Expressed in stromal fibroblasts. Strongly expressed in pericytes. Expressed on stromal cells and cells with lymphoid morphology such a T-cells.

Its subcellular location is the membrane. In terms of biological role, cell surface glycoprotein involved in various biological processes including angiogenesis, immune response modulation, and tissue remodeling and repair. Participates in pericyte proliferation through positive modulation of the PDGF receptor signaling pathway. Acts as a scaffold for factor X, triggering allosteric changes and the spatial re-alignment of factor X with the TF-factor VIIa complex, thereby enhancing coagulation activation. Modulates the insulin signaling pathway by interacting with insulin receptor/INSR and by diminishing its capacity to be autophosphorylated in response to insulin. Also regulates LPS-induced inflammatory response in macrophages by favoring the production of proinflammatory cytokines. In human, negatively regulates T-cell proliferation compared with stromal cells where it increases proliferation. This Homo sapiens (Human) protein is Endosialin (CD248).